Consider the following 729-residue polypeptide: Carbon monoxide dehydrogenase/acetyl-CoA synthase subunit alpha (729 aa).

[4Fe-4S] cluster is bound by residues Cys506, Cys509, Cys518, and Cys528. A Ni(2+)-binding site is contributed by Cys509. The Ni(2+) site is built by Cys595, Gly596, and Cys597.

As to quaternary structure, tetramer of two alpha and two beta chains. It depends on Ni cation as a cofactor. [4Fe-4S] cluster is required as a cofactor.

The enzyme catalyses Co(I)-[corrinoid Fe-S protein] + acetyl-CoA + H(+) = methyl-Co(III)-[corrinoid Fe-S protein] + CO + CoA. The beta subunit generates CO from CO(2), while the alpha subunit (this protein) combines the CO with CoA and a methyl group to form acetyl-CoA. The methyl group, which is incorporated into acetyl-CoA, is transferred to the alpha subunit by a corrinoid iron-sulfur protein. The chain is Carbon monoxide dehydrogenase/acetyl-CoA synthase subunit alpha from Moorella thermoacetica (Clostridium thermoaceticum).